The following is a 200-amino-acid chain: Isochorismatase family protein 2A (200 aa).

It belongs to the isochorismatase family.

This is Isochorismatase family protein 2A from Dictyostelium discoideum (Social amoeba).